A 292-amino-acid chain; its full sequence is ATP phosphoribosyltransferase (292 aa).

The protein belongs to the ATP phosphoribosyltransferase family. Long subfamily. The cofactor is Mg(2+).

It is found in the cytoplasm. The enzyme catalyses 1-(5-phospho-beta-D-ribosyl)-ATP + diphosphate = 5-phospho-alpha-D-ribose 1-diphosphate + ATP. Its pathway is amino-acid biosynthesis; L-histidine biosynthesis; L-histidine from 5-phospho-alpha-D-ribose 1-diphosphate: step 1/9. Feedback inhibited by histidine. Its function is as follows. Catalyzes the condensation of ATP and 5-phosphoribose 1-diphosphate to form N'-(5'-phosphoribosyl)-ATP (PR-ATP). Has a crucial role in the pathway because the rate of histidine biosynthesis seems to be controlled primarily by regulation of HisG enzymatic activity. This Desulfatibacillum aliphaticivorans protein is ATP phosphoribosyltransferase.